A 175-amino-acid polypeptide reads, in one-letter code: ATP synthase subunit delta (175 aa).

Belongs to the ATPase delta chain family. As to quaternary structure, F-type ATPases have 2 components, F(1) - the catalytic core - and F(0) - the membrane proton channel. F(1) has five subunits: alpha(3), beta(3), gamma(1), delta(1), epsilon(1). F(0) has three main subunits: a(1), b(2) and c(10-14). The alpha and beta chains form an alternating ring which encloses part of the gamma chain. F(1) is attached to F(0) by a central stalk formed by the gamma and epsilon chains, while a peripheral stalk is formed by the delta and b chains.

It is found in the cell inner membrane. F(1)F(0) ATP synthase produces ATP from ADP in the presence of a proton or sodium gradient. F-type ATPases consist of two structural domains, F(1) containing the extramembraneous catalytic core and F(0) containing the membrane proton channel, linked together by a central stalk and a peripheral stalk. During catalysis, ATP synthesis in the catalytic domain of F(1) is coupled via a rotary mechanism of the central stalk subunits to proton translocation. Its function is as follows. This protein is part of the stalk that links CF(0) to CF(1). It either transmits conformational changes from CF(0) to CF(1) or is implicated in proton conduction. This chain is ATP synthase subunit delta, found in Xylella fastidiosa (strain M12).